Reading from the N-terminus, the 169-residue chain is uncharacterized protein (169 aa).

A compositionally biased stretch (low complexity) spans 144-157; the sequence is AEAHSASPASSDSS. A disordered region spans residues 144-169; it reads AEAHSASPASSDSSPLTNNIRPISIM. Over residues 158–169 the composition is skewed to polar residues; that stretch reads PLTNNIRPISIM.

This is an uncharacterized protein from Saccharomyces cerevisiae (strain ATCC 204508 / S288c) (Baker's yeast).